We begin with the raw amino-acid sequence, 79 residues long: Antimicrobial peptide UyCT1 (79 aa).

Positions 1 to 23 are cleaved as a signal peptide; the sequence is MKTQLAFLAITVILMQLFAQTEA. At Ile-37 the chain carries Isoleucine amide. A propeptide spanning residues 41–79 is cleaved from the precursor; it reads GLRNVDQIADLFDSGLSDADDLFDSGLSDADAKFMKMFM.

This sequence belongs to the non-disulfide-bridged peptide (NDBP) superfamily. Short antimicrobial peptide (group 4) family. As to expression, expressed by the venom gland.

It localises to the secreted. It is found in the target cell membrane. Inhibits the growth of Gram-positive (S.aureus, MIC=15 uM) and Gram-negative bacteria (E.coli, MIC=10 uM and P.aeruginosa, MIC=10 uM). It also shows 26% of hemolysis when 15 uM are tested (81% at 50 uM). Functionally, inhibits the growth of Gram-negative bacteria (E.coli, MIC=25 uM and P.aeruginosa, MIC=40 uM). It also shows 7% of hemolysis when 50 uM are tested. Does not show activity against the Gram-positive bacteria S.aureus. The sequence is that of Antimicrobial peptide UyCT1 from Urodacus yaschenkoi (Inland robust scorpion).